Reading from the N-terminus, the 231-residue chain is Large ribosomal subunit protein uL1 (231 aa).

Belongs to the universal ribosomal protein uL1 family. As to quaternary structure, part of the 50S ribosomal subunit.

In terms of biological role, binds directly to 23S rRNA. The L1 stalk is quite mobile in the ribosome, and is involved in E site tRNA release. Its function is as follows. Protein L1 is also a translational repressor protein, it controls the translation of the L11 operon by binding to its mRNA. In Allorhizobium ampelinum (strain ATCC BAA-846 / DSM 112012 / S4) (Agrobacterium vitis (strain S4)), this protein is Large ribosomal subunit protein uL1.